Reading from the N-terminus, the 115-residue chain is MATIQFIQGINEEVVPDVRLTRSRDGSTGTATFRFTNPKILDASMADKGEITGMYLMDTEGQIITRDVNAKFINGKPQAIEAVHVIKSPDDWDRFMRFMERYAQDNGLTFTKASS.

The protein belongs to the Psb28 family. As to quaternary structure, part of the photosystem II complex.

It localises to the plastid. It is found in the chloroplast thylakoid membrane. The sequence is that of Photosystem II reaction center Psb28 protein from Pyropia yezoensis (Susabi-nori).